A 95-amino-acid polypeptide reads, in one-letter code: Large ribosomal subunit protein uL23 (95 aa).

The protein belongs to the universal ribosomal protein uL23 family. As to quaternary structure, part of the 50S ribosomal subunit. Contacts protein L29, and trigger factor when it is bound to the ribosome.

Its function is as follows. One of the early assembly proteins it binds 23S rRNA. One of the proteins that surrounds the polypeptide exit tunnel on the outside of the ribosome. Forms the main docking site for trigger factor binding to the ribosome. This is Large ribosomal subunit protein uL23 from Leuconostoc mesenteroides subsp. mesenteroides (strain ATCC 8293 / DSM 20343 / BCRC 11652 / CCM 1803 / JCM 6124 / NCDO 523 / NBRC 100496 / NCIMB 8023 / NCTC 12954 / NRRL B-1118 / 37Y).